An 823-amino-acid chain; its full sequence is NAD-dependent histone deacetylase sirtuin-1 (823 aa).

Positions 41–67 (LASTSTEAEAEAEATATTTEPATSELA) are enriched in low complexity. Positions 41 to 146 (LASTSTEAEA…SSSNCSSSVE (106 aa)) are disordered. The span at 72 to 95 (GEIKTKTLAAREEQEIGANLEHKT) shows a compositional bias: basic and acidic residues. The span at 104 to 137 (EDEDDEEEEEEDDEEEEEDDEEGITGTSNEDEDS) shows a compositional bias: acidic residues. Positions 204-499 (KLASVNTFDD…LCCDESVLTE (296 aa)) constitute a Deacetylase sirtuin-type domain. NAD(+) contacts are provided by residues 229–248 (GAGVSVSCGIPDFRSTNGIY) and 313–316 (QNID). Catalysis depends on His331, which acts as the Proton acceptor. Residues Cys339, Cys342, Cys363, and Cys366 each coordinate Zn(2+). Residues 427–429 (GSS), 452–454 (NRE), and Ser469 contribute to the NAD(+) site. 2 positions are modified to phosphoserine: Ser618 and Ser621. A compositionally biased stretch (acidic residues) spans 698–707 (DYSDDDDEEE). Disordered stretches follow at residues 698–722 (DYSDDDDEEEERSHNRHSDLFGNVG) and 777–823 (IIEQ…LAAV). Positions 798-813 (PSEENKQQTQIERSEE) are enriched in basic and acidic residues. The segment covering 814-823 (SPPPGQLAAV) has biased composition (pro residues).

Belongs to the sirtuin family. Class I subfamily. In terms of assembly, interacts with the transcriptional repressors hairy (hry) and deadpan (dpn); via basic domains. Associates with the Esc/E(z) histone methyltransferase complex. Interacts directly with E(z) and HDAC1/Rpd3. It depends on Zn(2+) as a cofactor.

It localises to the cytoplasm. It is found in the nucleus. Its subcellular location is the chromosome. The enzyme catalyses N(6)-acetyl-L-lysyl-[protein] + NAD(+) + H2O = 2''-O-acetyl-ADP-D-ribose + nicotinamide + L-lysyl-[protein]. In terms of biological role, NAD-dependent histone deacetylase involved in heterochromatic silencing. Mildly suppresses the heterochromatin-mediated silencing phenomenon known as position-effect variegation (PEV). Required for epigenetic silencing of the polycomb group proteins. Has histone H4 deacetylase activity in vitro. Required maternally for establishing proper segmentation of the embryo. Involved in sex determination. May be involved in the regulation of life span. This Drosophila melanogaster (Fruit fly) protein is NAD-dependent histone deacetylase sirtuin-1.